Reading from the N-terminus, the 204-residue chain is Urease accessory protein UreG (204 aa).

12-19 (GPVGSGKT) is a binding site for GTP.

The protein belongs to the SIMIBI class G3E GTPase family. UreG subfamily. In terms of assembly, homodimer. UreD, UreF and UreG form a complex that acts as a GTP-hydrolysis-dependent molecular chaperone, activating the urease apoprotein by helping to assemble the nickel containing metallocenter of UreC. The UreE protein probably delivers the nickel.

The protein resides in the cytoplasm. Functionally, facilitates the functional incorporation of the urease nickel metallocenter. This process requires GTP hydrolysis, probably effectuated by UreG. This Pseudomonas fluorescens (strain SBW25) protein is Urease accessory protein UreG.